The following is a 431-amino-acid chain: 4-hydroxy-3-methylbut-2-en-1-yl diphosphate synthase (flavodoxin) (431 aa).

Residues 1 to 21 are disordered; that stretch reads MNKLENPSQRDVAGPSPRHKT. Residues cysteine 310, cysteine 313, cysteine 356, and glutamate 363 each contribute to the [4Fe-4S] cluster site.

The protein belongs to the IspG family. Requires [4Fe-4S] cluster as cofactor.

The enzyme catalyses (2E)-4-hydroxy-3-methylbut-2-enyl diphosphate + oxidized [flavodoxin] + H2O + 2 H(+) = 2-C-methyl-D-erythritol 2,4-cyclic diphosphate + reduced [flavodoxin]. It functions in the pathway isoprenoid biosynthesis; isopentenyl diphosphate biosynthesis via DXP pathway; isopentenyl diphosphate from 1-deoxy-D-xylulose 5-phosphate: step 5/6. Converts 2C-methyl-D-erythritol 2,4-cyclodiphosphate (ME-2,4cPP) into 1-hydroxy-2-methyl-2-(E)-butenyl 4-diphosphate. This is 4-hydroxy-3-methylbut-2-en-1-yl diphosphate synthase (flavodoxin) from Nitrobacter hamburgensis (strain DSM 10229 / NCIMB 13809 / X14).